The sequence spans 290 residues: ATP synthase gamma chain (290 aa).

It belongs to the ATPase gamma chain family. In terms of assembly, F-type ATPases have 2 components, CF(1) - the catalytic core - and CF(0) - the membrane proton channel. CF(1) has five subunits: alpha(3), beta(3), gamma(1), delta(1), epsilon(1). CF(0) has three main subunits: a, b and c.

The protein resides in the cell membrane. Functionally, produces ATP from ADP in the presence of a proton gradient across the membrane. The gamma chain is believed to be important in regulating ATPase activity and the flow of protons through the CF(0) complex. The chain is ATP synthase gamma chain from Rubrobacter xylanophilus (strain DSM 9941 / JCM 11954 / NBRC 16129 / PRD-1).